The primary structure comprises 457 residues: MTKLWGGRFTESASAQAEAFGASISFDQKLAAVDLQGSLAHAQMLYEQGILEKTEWEQIEAGLKQLQTTLEQHVYTTVDEDIHMNLERLLTEQIGPVAGKLHTARSRNDQVATDLHLWMEQHVLELLSSLRNLQSVITEQAEQHVETVMPGYTHLQRAQPISLAHHLLAYFWMFERDADRLTDNLKRIRMSPLGAGALAGTTFPIDRFKSAELLGFEQVYPNSLDAVSDRDFVIEYLGIASTVMMHLSRFCEEIIIWASQEFSFIELSDAFSTGSSMMPQKKNPDFAELIRGKTGRVYGNLMGFLTTMKALPLAYNKDMQEDKEGVFDTADTVLQSVQIFTGMIESATFKTEALKKATMQDFSNATELADYLVTKGIPFREAHEIVGKAVLHCVQSGCFLKDLTLSTYQTFHPVIAEDVYPLLDPVQAVARRGSYGGTGFTAVRDQLALAKKQLEKL.

The protein belongs to the lyase 1 family. Argininosuccinate lyase subfamily.

It is found in the cytoplasm. It carries out the reaction 2-(N(omega)-L-arginino)succinate = fumarate + L-arginine. It participates in amino-acid biosynthesis; L-arginine biosynthesis; L-arginine from L-ornithine and carbamoyl phosphate: step 3/3. This chain is Argininosuccinate lyase, found in Exiguobacterium sibiricum (strain DSM 17290 / CCUG 55495 / CIP 109462 / JCM 13490 / 255-15).